Reading from the N-terminus, the 340-residue chain is Phosphate acyltransferase (340 aa).

This sequence belongs to the PlsX family. Homodimer. Probably interacts with PlsY.

Its subcellular location is the cytoplasm. The catalysed reaction is a fatty acyl-[ACP] + phosphate = an acyl phosphate + holo-[ACP]. It functions in the pathway lipid metabolism; phospholipid metabolism. In terms of biological role, catalyzes the reversible formation of acyl-phosphate (acyl-PO(4)) from acyl-[acyl-carrier-protein] (acyl-ACP). This enzyme utilizes acyl-ACP as fatty acyl donor, but not acyl-CoA. This is Phosphate acyltransferase from Trichodesmium erythraeum (strain IMS101).